The sequence spans 122 residues: Bet1-like SNARE 1-1 (122 aa).

At 1–103 (MNPRREPRGG…VFETKSSRRM (103 aa)) the chain is on the cytoplasmic side. The region spanning 32–94 (EINEHENERA…SGTMDRFKTV (63 aa)) is the t-SNARE coiled-coil homology domain. S56 bears the Phosphoserine mark. Residues 104–121 (LTLVASFVGLFLVIYYLT) form a helical; Anchor for type IV membrane protein membrane-spanning segment. A topological domain (vesicular) is located at residue R122.

Belongs to the BET1 family.

It localises to the golgi apparatus membrane. Its subcellular location is the endoplasmic reticulum membrane. Functionally, required for vesicular transport from the ER to the Golgi complex. Functions as a SNARE associated with ER-derived vesicles. The protein is Bet1-like SNARE 1-1 (BET11) of Arabidopsis thaliana (Mouse-ear cress).